A 436-amino-acid chain; its full sequence is Tol-Pal system protein TolB (436 aa).

An N-terminal signal peptide occupies residues 1-28; that stretch reads MEMLRRNFFRLLMVLVAGCGLIASPAKA.

Belongs to the TolB family. In terms of assembly, the Tol-Pal system is composed of five core proteins: the inner membrane proteins TolA, TolQ and TolR, the periplasmic protein TolB and the outer membrane protein Pal. They form a network linking the inner and outer membranes and the peptidoglycan layer.

It localises to the periplasm. Part of the Tol-Pal system, which plays a role in outer membrane invagination during cell division and is important for maintaining outer membrane integrity. In Sinorhizobium medicae (strain WSM419) (Ensifer medicae), this protein is Tol-Pal system protein TolB.